The chain runs to 105 residues: Defensin-like protein 106 (105 aa).

An N-terminal signal peptide occupies residues 1 to 24; sequence MANTPKTLIAFVFSVIVIISYVHC. 4 disulfide bridges follow: C57–C94, C63–C87, C73–C92, and C77–C93.

It belongs to the DEFL family.

It localises to the secreted. The protein is Defensin-like protein 106 of Arabidopsis thaliana (Mouse-ear cress).